We begin with the raw amino-acid sequence, 588 residues long: Zeta-carotene desaturase, chloroplastic/chromoplastic (588 aa).

The protein belongs to the zeta carotene desaturase family. It depends on NAD(+) as a cofactor. The cofactor is NADP(+). Requires FAD as cofactor.

The protein resides in the plastid. It is found in the chloroplast. It localises to the chromoplast. The catalysed reaction is 9,9'-di-cis-zeta-carotene + 2 a quinone = 7,7',9,9'-tetra-cis-lycopene + 2 a quinol. Its pathway is carotenoid biosynthesis; lycopene biosynthesis. Functionally, catalyzes the conversion of zeta-carotene to lycopene via the intermediary of neurosporene. It carries out two consecutive desaturations (introduction of double bonds) at positions C-7 and C-7'. The chain is Zeta-carotene desaturase, chloroplastic/chromoplastic (ZDS) from Solanum lycopersicum (Tomato).